The following is a 1167-amino-acid chain: Pesticidal crystal protein Cry21Aa (1167 aa).

Belongs to the delta endotoxin family.

Endotoxin with nematicidal activity. This chain is Pesticidal crystal protein Cry21Aa (cry21Aa), found in Bacillus thuringiensis.